Here is a 441-residue protein sequence, read N- to C-terminus: Mannose-6-phosphate isomerase (441 aa).

The Zn(2+) site is built by Q111, H113, E138, and H285. R304 is a catalytic residue.

The protein belongs to the mannose-6-phosphate isomerase type 1 family. In terms of assembly, monomer. It depends on Zn(2+) as a cofactor.

The protein localises to the cytoplasm. It carries out the reaction D-mannose 6-phosphate = D-fructose 6-phosphate. The protein operates within nucleotide-sugar biosynthesis; GDP-alpha-D-mannose biosynthesis; alpha-D-mannose 1-phosphate from D-fructose 6-phosphate: step 1/2. Functionally, involved in the synthesis of the GDP-mannose and dolichol-phosphate-mannose required for a number of critical mannosyl transfer reactions. The sequence is that of Mannose-6-phosphate isomerase (PMI1) from Candida albicans (strain SC5314 / ATCC MYA-2876) (Yeast).